A 442-amino-acid chain; its full sequence is Ribosomal protein uS12 methylthiotransferase RimO (442 aa).

The region spanning 5–117 (PSIGVVSLGC…VLDAIHAALP (113 aa)) is the MTTase N-terminal domain. The [4Fe-4S] cluster site is built by cysteine 14, cysteine 50, cysteine 79, cysteine 148, cysteine 152, and cysteine 155. Residues 134–371 (LTPPHYAYLK…MAVQEAISRQ (238 aa)) enclose the Radical SAM core domain. Positions 374–441 (QRRVGQRQRV…AHDLYGMVVS (68 aa)) constitute a TRAM domain.

It belongs to the methylthiotransferase family. RimO subfamily. It depends on [4Fe-4S] cluster as a cofactor.

The protein resides in the cytoplasm. The enzyme catalyses L-aspartate(89)-[ribosomal protein uS12]-hydrogen + (sulfur carrier)-SH + AH2 + 2 S-adenosyl-L-methionine = 3-methylsulfanyl-L-aspartate(89)-[ribosomal protein uS12]-hydrogen + (sulfur carrier)-H + 5'-deoxyadenosine + L-methionine + A + S-adenosyl-L-homocysteine + 2 H(+). Catalyzes the methylthiolation of an aspartic acid residue of ribosomal protein uS12. The chain is Ribosomal protein uS12 methylthiotransferase RimO from Acidithiobacillus ferrooxidans (strain ATCC 53993 / BNL-5-31) (Leptospirillum ferrooxidans (ATCC 53993)).